The chain runs to 107 residues: Cell cycle protein GpsB (107 aa).

A coiled-coil region spans residues 32-65; sequence LDNVIQDYETYISEIEELKAEIERLKNQNTHPKS. Positions 57–80 are disordered; the sequence is KNQNTHPKSPSTENRHAMVQPTRV. The span at 58–68 shows a compositional bias: polar residues; the sequence is NQNTHPKSPST.

It belongs to the GpsB family. Forms polymers through the coiled coil domains. Interacts with PBP1, MreC and EzrA.

It is found in the cytoplasm. In terms of biological role, divisome component that associates with the complex late in its assembly, after the Z-ring is formed, and is dependent on DivIC and PBP2B for its recruitment to the divisome. Together with EzrA, is a key component of the system that regulates PBP1 localization during cell cycle progression. Its main role could be the removal of PBP1 from the cell pole after pole maturation is completed. Also contributes to the recruitment of PBP1 to the division complex. Not essential for septum formation. This is Cell cycle protein GpsB from Streptococcus uberis (strain ATCC BAA-854 / 0140J).